The sequence spans 40 residues: Dihydrolipoyl dehydrogenase (40 aa).

36–40 (EKRGT) is a binding site for FAD.

This sequence belongs to the class-I pyridine nucleotide-disulfide oxidoreductase family. As to quaternary structure, homodimer. Requires FAD as cofactor.

It localises to the mitochondrion matrix. It catalyses the reaction N(6)-[(R)-dihydrolipoyl]-L-lysyl-[protein] + NAD(+) = N(6)-[(R)-lipoyl]-L-lysyl-[protein] + NADH + H(+). Functionally, lipoamide dehydrogenase is a component of the glycine cleavage system as well as of the alpha-ketoacid dehydrogenase complexes. The pyruvate dehydrogenase complex contains multiple copies of three enzymatic components: pyruvate dehydrogenase (E1), dihydrolipoamide acetyltransferase (E2) and lipoamide dehydrogenase (E3). The sequence is that of Dihydrolipoyl dehydrogenase from Solanum tuberosum (Potato).